The primary structure comprises 156 residues: SsrA-binding protein (156 aa).

The segment covering 135–150 (KRDTIKDREWQRDRSR) has biased composition (basic and acidic residues). The segment at 135–156 (KRDTIKDREWQRDRSRIMKKNT) is disordered.

It belongs to the SmpB family.

The protein localises to the cytoplasm. Required for rescue of stalled ribosomes mediated by trans-translation. Binds to transfer-messenger RNA (tmRNA), required for stable association of tmRNA with ribosomes. tmRNA and SmpB together mimic tRNA shape, replacing the anticodon stem-loop with SmpB. tmRNA is encoded by the ssrA gene; the 2 termini fold to resemble tRNA(Ala) and it encodes a 'tag peptide', a short internal open reading frame. During trans-translation Ala-aminoacylated tmRNA acts like a tRNA, entering the A-site of stalled ribosomes, displacing the stalled mRNA. The ribosome then switches to translate the ORF on the tmRNA; the nascent peptide is terminated with the 'tag peptide' encoded by the tmRNA and targeted for degradation. The ribosome is freed to recommence translation, which seems to be the essential function of trans-translation. The protein is SsrA-binding protein of Legionella pneumophila (strain Corby).